A 388-amino-acid chain; its full sequence is Chorismate synthase (388 aa).

Residues Arg39 and Arg45 each coordinate NADP(+). Residues 132–134 (RSS), 251–252 (NA), Gly296, 311–315 (KPIPT), and Arg337 contribute to the FMN site.

This sequence belongs to the chorismate synthase family. As to quaternary structure, homotetramer. FMNH2 is required as a cofactor.

It carries out the reaction 5-O-(1-carboxyvinyl)-3-phosphoshikimate = chorismate + phosphate. It participates in metabolic intermediate biosynthesis; chorismate biosynthesis; chorismate from D-erythrose 4-phosphate and phosphoenolpyruvate: step 7/7. Catalyzes the anti-1,4-elimination of the C-3 phosphate and the C-6 proR hydrogen from 5-enolpyruvylshikimate-3-phosphate (EPSP) to yield chorismate, which is the branch point compound that serves as the starting substrate for the three terminal pathways of aromatic amino acid biosynthesis. This reaction introduces a second double bond into the aromatic ring system. This is Chorismate synthase from Staphylococcus carnosus (strain TM300).